A 341-amino-acid chain; its full sequence is Glycerol-3-phosphate dehydrogenase [NAD(P)+] (341 aa).

NADPH is bound by residues Ser-14, Phe-15, Arg-35, and Lys-108. Residues Lys-108 and Gly-136 each coordinate sn-glycerol 3-phosphate. Ala-140 contributes to the NADPH binding site. The sn-glycerol 3-phosphate site is built by Lys-191, Asp-244, Ser-254, Arg-255, and Asn-256. Lys-191 functions as the Proton acceptor in the catalytic mechanism. Residue Arg-255 participates in NADPH binding. NADPH-binding residues include Val-279 and Glu-281.

It belongs to the NAD-dependent glycerol-3-phosphate dehydrogenase family.

Its subcellular location is the cytoplasm. The enzyme catalyses sn-glycerol 3-phosphate + NAD(+) = dihydroxyacetone phosphate + NADH + H(+). It catalyses the reaction sn-glycerol 3-phosphate + NADP(+) = dihydroxyacetone phosphate + NADPH + H(+). It functions in the pathway membrane lipid metabolism; glycerophospholipid metabolism. Functionally, catalyzes the reduction of the glycolytic intermediate dihydroxyacetone phosphate (DHAP) to sn-glycerol 3-phosphate (G3P), the key precursor for phospholipid synthesis. This Pseudomonas savastanoi pv. phaseolicola (strain 1448A / Race 6) (Pseudomonas syringae pv. phaseolicola (strain 1448A / Race 6)) protein is Glycerol-3-phosphate dehydrogenase [NAD(P)+].